Here is a 2962-residue protein sequence, read N- to C-terminus: Sex determination and dosage compensation protein sdc-2 (2962 aa).

Disordered regions lie at residues 1–28 and 1061–1110; these read MSDE…ADPD and DKRS…QVDP. Acidic residues predominate over residues 15–27; that stretch reads SFNESDSPDEADP. 2 coiled-coil regions span residues 995–1085 and 1140–1268; these read LESA…LADK and REER…KRVS. 2 disordered regions span residues 1535 to 1554 and 2198 to 2227; these read PASL…GSPV and LDSS…NQLD. Acidic residues predominate over residues 2212–2225; it reads FEDSPSEDENDENQ.

As to quaternary structure, component of the SDC complex, which consists of sdc-1, sdc-2 and sdc-3. Within the complex, interacts with sdc-1 and sdc-3. Expressed in hermaphrodites (XX), but absent in males (XO) (at protein level).

It is found in the chromosome. Functionally, component of the SDC complex that functions in sex determination and in X chromosome dosage compensation specifically in hermaphrodite (XX) animals. Required for the recruitment of the condensin I-like dosage compensation complex to the male sex-determining autosomal gene her-1, thereby contributing to its repression and initiating hermaphrodite sexual development. Plays a central role in X-chromosome recognition and in the recruitment and assembly of the dosage compensation complex and the dosage compensation protein dpy-21 onto the X chromosomes in hermaphrodites, which leads to a reduction of X-linked gene transcription and an equalization of X-linked gene expression between the sexes. May confer protection against toxicity induced by heavy metals such as arsenite. The protein is Sex determination and dosage compensation protein sdc-2 of Caenorhabditis elegans.